The following is a 73-amino-acid chain: Kazal peptide Pr13a (73 aa).

Positions 1–20 (MKYIILFLVLIGLQANLALG) are cleaved as a signal peptide. Positions 21-73 (SKCKCDCTKYPYSPVCAKELKTGDTETFNNVCQLQCYNCTHMKNYVVIYSGSC) constitute a Kazal-like domain. Disulfide bonds link Cys-23-Cys-59, Cys-27-Cys-52, and Cys-36-Cys-73.

As to expression, expressed by the venom gland (anterior main gland) (at protein level).

The protein resides in the secreted. May act as a serine protease inhibitor, since it possess the kazal serine protease inhibitor signature. This Platymeris rhadamanthus (Red spot assassin bug) protein is Kazal peptide Pr13a.